We begin with the raw amino-acid sequence, 503 residues long: D-alanine--D-alanyl carrier protein ligase (503 aa).

151-152 (TS) provides a ligand contact to ATP. Asp-196 is a binding site for D-alanine. Residue 291 to 296 (NTYGPT) coordinates ATP. Val-300 serves as a coordination point for D-alanine. ATP is bound by residues Asp-382, 393–396 (YNGR), and Lys-491. Lys-491 contacts D-alanine.

The protein belongs to the ATP-dependent AMP-binding enzyme family. DltA subfamily.

The protein localises to the cytoplasm. The catalysed reaction is holo-[D-alanyl-carrier protein] + D-alanine + ATP = D-alanyl-[D-alanyl-carrier protein] + AMP + diphosphate. It functions in the pathway cell wall biogenesis; lipoteichoic acid biosynthesis. Catalyzes the first step in the D-alanylation of lipoteichoic acid (LTA), the activation of D-alanine and its transfer onto the D-alanyl carrier protein (Dcp) DltC. In an ATP-dependent two-step reaction, forms a high energy D-alanyl-AMP intermediate, followed by transfer of the D-alanyl residue as a thiol ester to the phosphopantheinyl prosthetic group of the Dcp. D-alanylation of LTA plays an important role in modulating the properties of the cell wall in Gram-positive bacteria, influencing the net charge of the cell wall. The sequence is that of D-alanine--D-alanyl carrier protein ligase from Bacillus anthracis (strain A0248).